The following is a 67-amino-acid chain: Major cold shock protein (67 aa).

The CSD domain maps to 4-63 (GTVKWFNAEKGFGFISTENGQDVFAHFSAIQTNGFKTLEEGQKVAFDVEEGQRGPQAVNI).

In terms of assembly, homodimer.

The protein localises to the cytoplasm. The polypeptide is Major cold shock protein (cspA) (Streptococcus pyogenes serotype M3 (strain ATCC BAA-595 / MGAS315)).